The sequence spans 878 residues: DNA mismatch repair protein MutS (878 aa).

ATP is bound at residue G629–S636.

Belongs to the DNA mismatch repair MutS family.

Its function is as follows. This protein is involved in the repair of mismatches in DNA. It is possible that it carries out the mismatch recognition step. This protein has a weak ATPase activity. This is DNA mismatch repair protein MutS from Roseobacter denitrificans (strain ATCC 33942 / OCh 114) (Erythrobacter sp. (strain OCh 114)).